A 277-amino-acid polypeptide reads, in one-letter code: Large ribosomal subunit protein uL2 (277 aa).

Positions 219-277 are disordered; sequence TVRGSVMNPNDHPHGGGEGRSPIGHPSPRTPWGKPALGYKTRKNKKYSDRFIVKRRHDK.

It belongs to the universal ribosomal protein uL2 family. Part of the 50S ribosomal subunit. Forms a bridge to the 30S subunit in the 70S ribosome.

Its function is as follows. One of the primary rRNA binding proteins. Required for association of the 30S and 50S subunits to form the 70S ribosome, for tRNA binding and peptide bond formation. It has been suggested to have peptidyltransferase activity; this is somewhat controversial. Makes several contacts with the 16S rRNA in the 70S ribosome. In Clostridium botulinum (strain ATCC 19397 / Type A), this protein is Large ribosomal subunit protein uL2.